Consider the following 293-residue polypeptide: Protease HtpX (293 aa).

The next 2 helical transmembrane spans lie at 4 to 24 (IALF…VLSL) and 34 to 54 (GLMI…LLMS). H139 contacts Zn(2+). Residue E140 is part of the active site. H143 is a binding site for Zn(2+). 2 helical membrane passes run 158 to 178 (VVNT…AGFM) and 193 to 213 (LIYF…ASII). A Zn(2+)-binding site is contributed by E222.

The protein belongs to the peptidase M48B family. Zn(2+) serves as cofactor.

Its subcellular location is the cell inner membrane. The sequence is that of Protease HtpX from Escherichia coli O127:H6 (strain E2348/69 / EPEC).